Here is a 122-residue protein sequence, read N- to C-terminus: NLIQFKKMIKKMTGKEPVVSYAFYGCYCGSGGRGKPKDATDRCCFVHNCCYEKVTGCDPKWDDYTYSWKNGTIVCGGDDPCKKEVCECDKAAAICFRDNLKTYKKRYMTYPNILCSSKSEKC.

7 disulfides stabilise this stretch: C26-C115, C28-C44, C43-C95, C49-C122, C50-C88, C57-C81, and C75-C86. The important for membrane-damaging activities in eukaryotes and bacteria; heparin-binding stretch occupies residues 105–117 (KRYMTYPNILCSS).

This sequence belongs to the phospholipase A2 family. Group II subfamily. N49 sub-subfamily. In terms of tissue distribution, expressed by the venom gland.

The protein localises to the secreted. The protein is Basic phospholipase A2 homolog of Gloydius halys (Chinese water mocassin).